A 268-amino-acid polypeptide reads, in one-letter code: Indole-3-glycerol phosphate synthase 2 (268 aa).

It belongs to the TrpC family.

It carries out the reaction 1-(2-carboxyphenylamino)-1-deoxy-D-ribulose 5-phosphate + H(+) = (1S,2R)-1-C-(indol-3-yl)glycerol 3-phosphate + CO2 + H2O. It functions in the pathway amino-acid biosynthesis; L-tryptophan biosynthesis; L-tryptophan from chorismate: step 4/5. This is Indole-3-glycerol phosphate synthase 2 (trpC2) from Ralstonia nicotianae (strain ATCC BAA-1114 / GMI1000) (Ralstonia solanacearum).